We begin with the raw amino-acid sequence, 173 residues long: uncharacterized protein (173 aa).

The span at methionine 1–lysine 11 shows a compositional bias: basic and acidic residues. The segment at methionine 1 to tyrosine 173 is disordered. Over residues phenylalanine 17–isoleucine 41 the composition is skewed to polar residues. 2 stretches are compositionally biased toward basic and acidic residues: residues lysine 56–asparagine 109 and alanine 120–lysine 144. A compositionally biased stretch (basic residues) spans lysine 145–lysine 156. The segment covering asparagine 157–tyrosine 173 has biased composition (basic and acidic residues).

This is an uncharacterized protein from Caenorhabditis elegans.